An 87-amino-acid chain; its full sequence is Small ribosomal subunit protein eS21 (87 aa).

Belongs to the eukaryotic ribosomal protein eS21 family. Component of the small ribosomal subunit (SSU). Mature N.crassa ribosomes consist of a small (40S) and a large (60S) subunit. The 40S small subunit contains 1 molecule of ribosomal RNA (18S rRNA) and at least 32 different proteins. The large 60S subunit contains 3 rRNA molecules (26S, 5.8S and 5S rRNA) and at least 42 different proteins.

It is found in the cytoplasm. Component of the ribosome, a large ribonucleoprotein complex responsible for the synthesis of proteins in the cell. The small ribosomal subunit (SSU) binds messenger RNAs (mRNAs) and translates the encoded message by selecting cognate aminoacyl-transfer RNA (tRNA) molecules. The large subunit (LSU) contains the ribosomal catalytic site termed the peptidyl transferase center (PTC), which catalyzes the formation of peptide bonds, thereby polymerizing the amino acids delivered by tRNAs into a polypeptide chain. The nascent polypeptides leave the ribosome through a tunnel in the LSU and interact with protein factors that function in enzymatic processing, targeting, and the membrane insertion of nascent chains at the exit of the ribosomal tunnel. This chain is Small ribosomal subunit protein eS21 (crp-7), found in Neurospora crassa (strain ATCC 24698 / 74-OR23-1A / CBS 708.71 / DSM 1257 / FGSC 987).